A 278-amino-acid chain; its full sequence is Ribonuclease HII (278 aa).

Residues 71 to 259 (WPVAGCDEAG…VAAAWDKHAP (189 aa)) enclose the RNase H type-2 domain. A divalent metal cation is bound by residues Asp-77, Glu-78, and Asp-168.

The protein belongs to the RNase HII family. Mn(2+) is required as a cofactor. It depends on Mg(2+) as a cofactor.

It localises to the cytoplasm. It carries out the reaction Endonucleolytic cleavage to 5'-phosphomonoester.. In terms of biological role, endonuclease that specifically degrades the RNA of RNA-DNA hybrids. This chain is Ribonuclease HII, found in Rhodopseudomonas palustris (strain BisA53).